Here is a 660-residue protein sequence, read N- to C-terminus: Dual specificity mitogen-activated protein kinase kinase 1 (660 aa).

The span at 1 to 57 shows a compositional bias: low complexity; sequence MNTNTNTNTNISSSGNNIINTPTTNNNNKNNNNNNNNNNNSNNSNNNSSNNNNNNNN. Disordered regions lie at residues 1 to 60, 105 to 169, and 204 to 229; these read MNTN…NAVG, KGES…FNNL, and NNNY…SNNN. Residue Lys105 forms a Glycyl lysine isopeptide (Lys-Gly) (interchain with G-Cter in SUMO) linkage. Residues 123 to 148 are compositionally biased toward polar residues; the sequence is LHSNLNPQLLASPTSSESMDFNQGFY. The segment covering 149 to 169 has biased composition (low complexity); the sequence is NNNNNNNNNNNNNNLNNFNNL. The Protein kinase domain maps to 292–641; it reads LKIIRVLGRG…ASNLLNHEFV (350 aa). Residues 298 to 306 and Lys321 contribute to the ATP site; that span reads LGRGAGGVV. Asp414 (proton acceptor) is an active-site residue. 2 disordered regions span residues 491 to 510 and 539 to 573; these read SNLP…QQQQ and NNSN…VLDI. Low complexity-rich tracts occupy residues 496–510 and 539–569; these read QQQQ…QQQQ and NNSN…NNNN.

It belongs to the protein kinase superfamily. STE Ser/Thr protein kinase family. MAP kinase kinase subfamily. As to quaternary structure, interacts with mip1. The cofactor is Mg(2+). Post-translationally, sumoylated and ubiquitinated in response to chemoattractant stimulation. Sumoylation is linked to kinase activation and results in translocation.

The protein localises to the cytoplasm. It is found in the nucleus. It catalyses the reaction L-seryl-[protein] + ATP = O-phospho-L-seryl-[protein] + ADP + H(+). The catalysed reaction is L-threonyl-[protein] + ATP = O-phospho-L-threonyl-[protein] + ADP + H(+). The enzyme catalyses L-tyrosyl-[protein] + ATP = O-phospho-L-tyrosyl-[protein] + ADP + H(+). In terms of biological role, required for cAMP-mediated activation of guanylyl cyclase activity and plays an essential role in aggregation, morphogenesis, and chemotaxis. Appears to act upstream of erk1 but not erk2. The polypeptide is Dual specificity mitogen-activated protein kinase kinase 1 (Dictyostelium discoideum (Social amoeba)).